The chain runs to 526 residues: Nitrogenase iron-iron protein alpha chain (526 aa).

3 residues coordinate [8Fe-7S] cluster: C49, C75, and C138. Positions 257 and 423 each coordinate [8Fe-9S-C-homocitryl] cluster. Positions 507–526 (RNQPMPPSRKLRDAVQPAAE) are disordered.

It belongs to the NifD/NifK/NifE/NifN family. As to quaternary structure, hexamer of two alpha, two beta, and two delta chains. [8Fe-7S] cluster is required as a cofactor. [8Fe-9S-C-homocitryl] cluster serves as cofactor.

It carries out the reaction N2 + 8 reduced [2Fe-2S]-[ferredoxin] + 16 ATP + 16 H2O = H2 + 8 oxidized [2Fe-2S]-[ferredoxin] + 2 NH4(+) + 16 ADP + 16 phosphate + 6 H(+). In terms of biological role, this iron-iron protein is part of the nitrogenase complex that catalyzes the key enzymatic reactions in nitrogen fixation. Other nitrogenase complexes utilize a molybdenum-iron protein or a vanadium-iron protein. In Rhodobacter capsulatus (Rhodopseudomonas capsulata), this protein is Nitrogenase iron-iron protein alpha chain (anfD).